Here is a 416-residue protein sequence, read N- to C-terminus: MAGPFSRLLSARPGLRLLALAGAGSLAAGFLLRPEPIRAASERRRQYPPSAEYPDLRKHNNCMASHLTPAVYARLCDKTTPTGWTLDQCIQTGVDNPGHPFIKTVGMVAGDEETYEVFAELFDPVIQERHNGYDPRTMKHTTDLDASKIRSGFFDERYVLSSRVRTGRSIRGLSLPPACTRAERREVERVVVDALSGLKGDLAGRYYRLSEMTEAEQQQLIDDHFLFDKPVSPLLTAAGMARDWPDARGIWHNNEKSFLIWVNEEDHTRVISMEKGGNMKKVFERFCRGLKEVERLIQERGWEFMWNERLGYILTCPSNLGTGLRAGVHIKLPLLSKDSRFPKILENLRLQKRGTGGVDTAATGSIFDISNLDRLGKSEVELVQLVIDGVNYLIDCERRLERGQDIRIPPPLPNKH.

A mitochondrion-targeting transit peptide spans 1–39 (MAGPFSRLLSARPGLRLLALAGAGSLAAGFLLRPEPIRA). The cardiolipin-binding stretch occupies residues 40–63 (ASERRRQYPPSAEYPDLRKHNNCM). A Phosphagen kinase N-terminal domain is found at 44–131 (RRQYPPSAEY…FDPVIQERHN (88 aa)). Serine 151 is modified (phosphoserine). Positions 158–400 (YVLSSRVRTG…NYLIDCERRL (243 aa)) constitute a Phosphagen kinase C-terminal domain. ATP is bound at residue 161-165 (SSRVR). Serine 196 bears the Phosphoserine mark. A Phosphothreonine modification is found at threonine 213. An ATP-binding site is contributed by histidine 224. Serine 232 carries the phosphoserine modification. ATP contacts are provided by residues arginine 269, arginine 325, and 353 to 358 (RGTGGV). Position 355 is a phosphothreonine (threonine 355). Serine 365 carries the phosphoserine modification. Aspartate 368 is an ATP binding site.

Belongs to the ATP:guanido phosphotransferase family. As to quaternary structure, exists as an octamer composed of four MTCK homodimers.

It localises to the mitochondrion inner membrane. The catalysed reaction is creatine + ATP = N-phosphocreatine + ADP + H(+). In terms of biological role, reversibly catalyzes the transfer of phosphate between ATP and various phosphogens (e.g. creatine phosphate). Creatine kinase isoenzymes play a central role in energy transduction in tissues with large, fluctuating energy demands, such as skeletal muscle, heart, brain and spermatozoa. The chain is Creatine kinase U-type, mitochondrial (CKMT1) from Sus scrofa (Pig).